The chain runs to 247 residues: Cell division protein ZapD (247 aa).

Belongs to the ZapD family. Interacts with FtsZ.

The protein localises to the cytoplasm. Cell division factor that enhances FtsZ-ring assembly. Directly interacts with FtsZ and promotes bundling of FtsZ protofilaments, with a reduction in FtsZ GTPase activity. The protein is Cell division protein ZapD of Escherichia coli O17:K52:H18 (strain UMN026 / ExPEC).